We begin with the raw amino-acid sequence, 350 residues long: tRNA N6-adenosine threonylcarbamoyltransferase (350 aa).

Residues H117 and H121 each coordinate Fe cation. Substrate is bound by residues 140-144, D173, G186, and N277; that span reads LVSGG. D305 contacts Fe cation.

It belongs to the KAE1 / TsaD family. It depends on Fe(2+) as a cofactor.

It is found in the cytoplasm. It catalyses the reaction L-threonylcarbamoyladenylate + adenosine(37) in tRNA = N(6)-L-threonylcarbamoyladenosine(37) in tRNA + AMP + H(+). In terms of biological role, required for the formation of a threonylcarbamoyl group on adenosine at position 37 (t(6)A37) in tRNAs that read codons beginning with adenine. Is involved in the transfer of the threonylcarbamoyl moiety of threonylcarbamoyl-AMP (TC-AMP) to the N6 group of A37, together with TsaE and TsaB. TsaD likely plays a direct catalytic role in this reaction. This Novosphingobium aromaticivorans (strain ATCC 700278 / DSM 12444 / CCUG 56034 / CIP 105152 / NBRC 16084 / F199) protein is tRNA N6-adenosine threonylcarbamoyltransferase.